The sequence spans 498 residues: Guanosine-5'-triphosphate,3'-diphosphate pyrophosphatase (498 aa).

The protein belongs to the GppA/Ppx family. GppA subfamily.

The catalysed reaction is guanosine 3'-diphosphate 5'-triphosphate + H2O = guanosine 3',5'-bis(diphosphate) + phosphate + H(+). The protein operates within purine metabolism; ppGpp biosynthesis; ppGpp from GTP: step 2/2. Functionally, catalyzes the conversion of pppGpp to ppGpp. Guanosine pentaphosphate (pppGpp) is a cytoplasmic signaling molecule which together with ppGpp controls the 'stringent response', an adaptive process that allows bacteria to respond to amino acid starvation, resulting in the coordinated regulation of numerous cellular activities. The polypeptide is Guanosine-5'-triphosphate,3'-diphosphate pyrophosphatase (Yersinia enterocolitica serotype O:8 / biotype 1B (strain NCTC 13174 / 8081)).